Here is a 173-residue protein sequence, read N- to C-terminus: Glutamyl-tRNA(Gln) amidotransferase subunit C, mitochondrial (173 aa).

This sequence belongs to the GatC family. In terms of assembly, subunit of the heterotrimeric GatCAB amidotransferase (AdT) complex, composed of A, B and C subunits.

It localises to the mitochondrion. It carries out the reaction L-glutamyl-tRNA(Gln) + L-glutamine + ATP + H2O = L-glutaminyl-tRNA(Gln) + L-glutamate + ADP + phosphate + H(+). Allows the formation of correctly charged Gln-tRNA(Gln) through the transamidation of misacylated Glu-tRNA(Gln) in the mitochondria. The reaction takes place in the presence of glutamine and ATP through an activated gamma-phospho-Glu-tRNA(Gln). The protein is Glutamyl-tRNA(Gln) amidotransferase subunit C, mitochondrial of Drosophila persimilis (Fruit fly).